The sequence spans 126 residues: Aspartate 1-decarboxylase (126 aa).

Residue S25 is the Schiff-base intermediate with substrate; via pyruvic acid of the active site. At S25 the chain carries Pyruvic acid (Ser). T57 is a substrate binding site. The Proton donor role is filled by Y58. Position 72 to 74 (72 to 74 (GAA)) interacts with substrate.

The protein belongs to the PanD family. Heterooctamer of four alpha and four beta subunits. The cofactor is pyruvate. In terms of processing, is synthesized initially as an inactive proenzyme, which is activated by self-cleavage at a specific serine bond to produce a beta-subunit with a hydroxyl group at its C-terminus and an alpha-subunit with a pyruvoyl group at its N-terminus.

Its subcellular location is the cytoplasm. It carries out the reaction L-aspartate + H(+) = beta-alanine + CO2. It participates in cofactor biosynthesis; (R)-pantothenate biosynthesis; beta-alanine from L-aspartate: step 1/1. Its function is as follows. Catalyzes the pyruvoyl-dependent decarboxylation of aspartate to produce beta-alanine. In Campylobacter jejuni subsp. jejuni serotype O:6 (strain 81116 / NCTC 11828), this protein is Aspartate 1-decarboxylase.